Consider the following 131-residue polypeptide: Peptide methionine sulfoxide reductase MsrB (131 aa).

A MsrB domain is found at 8–130 (DAEWRAQLTD…NSVCLDLKRS (123 aa)). 4 residues coordinate Zn(2+): cysteine 47, cysteine 50, cysteine 96, and cysteine 99. The Nucleophile role is filled by cysteine 119.

This sequence belongs to the MsrB Met sulfoxide reductase family. The cofactor is Zn(2+).

It catalyses the reaction L-methionyl-[protein] + [thioredoxin]-disulfide + H2O = L-methionyl-(R)-S-oxide-[protein] + [thioredoxin]-dithiol. This chain is Peptide methionine sulfoxide reductase MsrB, found in Alkalilimnicola ehrlichii (strain ATCC BAA-1101 / DSM 17681 / MLHE-1).